A 982-amino-acid polypeptide reads, in one-letter code: Presequence protease, mitochondrial (982 aa).

A mitochondrion-targeting transit peptide spans 1–7 (MFQIRNY). H84 is a binding site for Zn(2+). Catalysis depends on E87, which acts as the Proton acceptor. Position 88 (H88) interacts with Zn(2+). E160 is an active-site residue. E185 is a Zn(2+) binding site.

It belongs to the peptidase M16 family. PreP subfamily. Monomer and homodimer; homodimerization is induced by binding of the substrate. Zn(2+) is required as a cofactor.

The protein resides in the mitochondrion intermembrane space. It is found in the mitochondrion matrix. In terms of biological role, degrades mitochondrial transit peptides after their cleavage in the intermembrane space or in the matrix, and presequence peptides; clearance of these peptides is required to keep the presequence processing machinery running. Preferentially cleaves the N-terminal side of paired basic amino acid residues. Also degrades other unstructured peptides. May function as an ATP-dependent peptidase as opposed to a metalloendopeptidase. The protein is Presequence protease, mitochondrial (CYM1) of Kluyveromyces lactis (strain ATCC 8585 / CBS 2359 / DSM 70799 / NBRC 1267 / NRRL Y-1140 / WM37) (Yeast).